A 584-amino-acid chain; its full sequence is Vesicular glutamate transporter 2.1 (584 aa).

Residues 1–70 (METPREPAGF…CTCFGLPRRY (70 aa)) lie on the Cytoplasmic side of the membrane. A helical transmembrane segment spans residues 71 to 91 (IIAIMSGLGFCISFGIRCNLG). Residues 92–124 (VAIVSMVNNSTIHLNGKIIIKEKAKFNWDPETV) lie on the Vesicular side of the membrane. N-linked (GlcNAc...) asparagine glycosylation is found at Asn99 and Asn100. The chain crosses the membrane as a helical span at residues 125–145 (GLIHGSFFWGYIVTQIPGGYI). The Cytoplasmic portion of the chain corresponds to 146-148 (SSR). A helical transmembrane segment spans residues 149–169 (LAANRVFGAAILLTSTLNMFI). Residues 170 to 177 (PSAARGHY) lie on the Vesicular side of the membrane. Residues 178–198 (GCVIFVRILQGLVEGVTYPAC) traverse the membrane as a helical segment. Over 199 to 216 (HGIWSKWAPPLERSRLAT) the chain is Cytoplasmic. Residues 217 to 237 (TSFCGSYAGAVIAMPLAGILV) traverse the membrane as a helical segment. Topologically, residues 238-244 (QYTGWSS) are vesicular. A helical membrane pass occupies residues 245–265 (VFYVYGCFGIFWYMFWILVSY). Topologically, residues 266 to 310 (ESPAEHPTITAEERCYIEESIGESAKLLGPADKFKTPWRKFFTSM) are cytoplasmic. The helical transmembrane segment at 311–331 (PVYAIIVANFCRSWTFYLLLI) threads the bilayer. Over 332–349 (SQPAYFEEVFGFEISKVG) the chain is Vesicular. Residues 350 to 370 (MLSALPHLVMTIIVPIGGQLA) traverse the membrane as a helical segment. Residues 371 to 386 (DHLRSKNILSTTTVRK) are Cytoplasmic-facing. A helical membrane pass occupies residues 387–407 (IMNCGGFGMEATLLLIVGYSH). Over 408-409 (SK) the chain is Vesicular. The helical transmembrane segment at 410–430 (GVAISFLVLAVGFSGFAISGF) threads the bilayer. Over 431 to 445 (NVNHLDIAPRYASIL) the chain is Cytoplasmic. The helical transmembrane segment at 446-466 (MGISNGVGTLSGMVCPLIVGA) threads the bilayer. Topologically, residues 467-477 (MTKHKTREEWQ) are vesicular. Residues 478-498 (YVFLIASLVHYGGVIFYGIFA) traverse the membrane as a helical segment. Residues 499–584 (SGEKQPWADP…YGYRQGGNYS (86 aa)) lie on the Cytoplasmic side of the membrane.

It belongs to the major facilitator superfamily. Sodium/anion cotransporter family. VGLUT subfamily. As to expression, expressed in spinal cord and retinal ganglion cells.

Its subcellular location is the cytoplasmic vesicle. It is found in the secretory vesicle. It localises to the synaptic vesicle membrane. The protein localises to the membrane. The protein resides in the synapse. Its subcellular location is the synaptosome. It is found in the cell membrane. The catalysed reaction is L-glutamate(out) = L-glutamate(in). The enzyme catalyses 3 Na(+)(out) + phosphate(out) = 3 Na(+)(in) + phosphate(in). It carries out the reaction phosphate(in) = phosphate(out). It catalyses the reaction K(+)(in) + H(+)(out) = K(+)(out) + H(+)(in). The catalysed reaction is chloride(in) = chloride(out). Chloride channel activity is allosterically activated by lumenal H(+) and Cl(-) leading to synaptic vesicles acidification. The L-glutamate transport activity is allosterically activated by lumenal H(+) and Cl(-). The allosteric requirement for H(+) efficiently prevents non-vesicular efflux across the plasma membrane. The L-glutamate uniporter activity exhibits a biphasic dependence on chloride concentration. Its function is as follows. Multifunctional transporter that transports L-glutamate as well as multiple ions such as chloride, proton, potassium, sodium and phosphate. At the synaptic vesicle membrane, mainly functions as a uniporter which transports preferentially L-glutamate but also, phosphate from the cytoplasm into synaptic vesicles at presynaptic nerve terminals of excitatory neural cells. The L-glutamate or phosphate uniporter activity is electrogenic and is driven by the proton electrochemical gradient, mainly by the electrical gradient established by the vacuolar H(+)-ATPase across the synaptic vesicle membrane. In addition, functions as a chloride channel that allows a chloride permeation through the synaptic vesicle membrane therefore affects the proton electrochemical gradient and promotes synaptic vesicles acidification. Moreover, functions as a vesicular K(+)/H(+) antiport allowing to maintain the electrical gradient and to decrease chemical gradient and therefore sustain vesicular L-glutamate uptake. The vesicular H(+)/H(+) antiport activity is electroneutral. At the plasma membrane, following exocytosis, functions as a symporter of Na(+) and phosphate from the extracellular space to the cytoplasm allowing synaptic phosphate homeostasis regulation. The symporter activity is driven by an inside negative membrane potential and is electrogenic. Also involved in the regulation of retinal hyaloid vessel regression during postnatal development. May also play a role in the endocrine L-glutamatergic system of other tissues such as pineal gland and pancreas. Required for glutamate release by retinotectal synapses and visual acuity. This chain is Vesicular glutamate transporter 2.1 (slc17a6b), found in Danio rerio (Zebrafish).